We begin with the raw amino-acid sequence, 545 residues long: EH domain-containing protein 1 (545 aa).

2 EF-hand domains span residues 14-49 (ENQM…SNLP) and 50-83 (RPEL…VSLA). An EH domain is found at 15-93 (NQMIYKEWFE…QTGHEISHEV (79 aa)). Positions 27, 29, 31, 33, 38, 61, 67, and 72 each coordinate Ca(2+). Residues 194 to 429 (FDAKPMVMLL…DLLADLKDIP (236 aa)) enclose the Dynamin-type G domain. Residues 204 to 211 (GQYSTGKT) form a G1 motif region. Residue 204–211 (GQYSTGKT) participates in GTP binding. The tract at residues 230 to 231 (EP) is G2 motif. Positions 292 to 295 (DTPG) are G3 motif. GTP is bound by residues 309 to 313 (DFTGV) and Lys-359. The G4 motif stretch occupies residues 358–361 (NKAD). Residue Val-382 is a region of interest, G5 motif. 395–398 (SFSD) contributes to the GTP binding site. A coiled-coil region spans residues 467-490 (KAKAQQKLIDNLEDEFGKVQREHH).

The protein belongs to the TRAFAC class dynamin-like GTPase superfamily. Dynamin/Fzo/YdjA family. EHD subfamily. Homooligomer, and heterooligomer with EHD2.

The protein localises to the endosome membrane. Its subcellular location is the cell membrane. It localises to the cytoplasm. It catalyses the reaction GTP + H2O = GDP + phosphate + H(+). Its function is as follows. Involved in endocytosis positive regulation. Acts in early endocytic membrane fusion and membrane trafficking of recycling endosomes. Confers salt tolerance. This Arabidopsis thaliana (Mouse-ear cress) protein is EH domain-containing protein 1.